Here is a 616-residue protein sequence, read N- to C-terminus: Prolactin receptor (616 aa).

The signal sequence occupies residues 1–24; it reads MKENVASMIVFLLLLFLNIRLLKG. Residues 25 to 234 are Extracellular-facing; sequence QSPPGKPFIF…QIPNDFTMKD (210 aa). 2 consecutive Fibronectin type-III domains span residues 27-128 and 129-229; these read PPGK…VEPD and PPVN…IPND. An intrachain disulfide couples Cys36 to Cys46. Asn59 carries N-linked (GlcNAc...) asparagine glycosylation. A disulfide bond links Cys75 and Cys86. 2 N-linked (GlcNAc...) asparagine glycosylation sites follow: Asn104 and Asn132. Residues Asp211 and His212 each coordinate Zn(2+). The WSXWS motif motif lies at 215–219; it reads WSVWS. Residues 235–258 form a helical membrane-spanning segment; that stretch reads ITVWIFVAVLSTIICLIMVWAVAL. At 259–616 the chain is on the cytoplasmic side; sequence KGYSMVTCIF…DPACFMHSLH (358 aa). The short motif at 267 to 275 is the Box 1 motif element; sequence IFPPVPGPK. Disordered regions lie at residues 326-375, 454-492, and 568-593; these read MPAH…STFH, QSSK…PKEK, and ESTK…STAP. The segment covering 463–482 has biased composition (basic and acidic residues); that stretch reads GEEKATKQREVESSHSKAEQ.

The protein belongs to the type I cytokine receptor family. Type 1 subfamily. Interacts with SMARCA1. Interacts with NEK3 and VAV2 and this interaction is prolactin-dependent.

It is found in the membrane. In terms of biological role, this is a receptor for the anterior pituitary hormone prolactin. The protein is Prolactin receptor (PRLR) of Oryctolagus cuniculus (Rabbit).